Here is an 859-residue protein sequence, read N- to C-terminus: ATP-dependent DNA helicase PIF1 (859 aa).

The transit peptide at 1-45 (MPKWIRSTLNHIIPRRPFICSFNSFLLLKNVSHAKLSFSMSSRGF) directs the protein to the mitochondrion. Residues Ser70 and Ser72 each carry the phosphoserine modification. A compositionally biased stretch (polar residues) spans 142-157 (NSFDQSSQKKSRSTGF). Residues 142–183 (NSFDQSSQKKSRSTGFKNPLRPALKKESSFDELQNSSISQER) are disordered. Phosphoserine is present on Ser169. A compositionally biased stretch (polar residues) spans 172–182 (DELQNSSISQE). 258–265 (GSAGTGKS) provides a ligand contact to ATP. A Phosphoserine modification is found at Ser584. A DNA-binding region spans residues 727–746 (QAYVALSRAVSREGLQVLNF). The interval 782–859 (KRKLDYAPGP…GQDTEDHILE (78 aa)) is disordered. The span at 800–809 (KSNSPAPISA) shows a compositional bias: low complexity. Residues 844–859 (VSDEPRGQDTEDHILE) show a composition bias toward basic and acidic residues.

It belongs to the helicase family. PIF1 subfamily. As to quaternary structure, monomer in solution. DNA binding induces dimerization. Associates with mitochondrial and telomeric DNA. Binding to mtDNA is non-specific and the protein seems to coat the entire mtDNA molecule. Binds to the telomerase RNA TLC1. Interacts with the mitochondrial single-strand DNA-binding protein RIM1. Mg(2+) is required as a cofactor. Mn(2+) serves as cofactor. In terms of processing, phosphorylated. Undergoes RAD53-dependent phosphorylation in response to loss of mtDNA.

Its subcellular location is the nucleus. The protein localises to the nucleolus. The protein resides in the mitochondrion inner membrane. It catalyses the reaction Couples ATP hydrolysis with the unwinding of duplex DNA at the replication fork by translocating in the 5'-3' direction. This creates two antiparallel DNA single strands (ssDNA). The leading ssDNA polymer is the template for DNA polymerase III holoenzyme which synthesizes a continuous strand.. It carries out the reaction ATP + H2O = ADP + phosphate + H(+). Its function is as follows. DNA-dependent ATPase and 5'-3' DNA helicase required for the maintenance of both mitochondrial and nuclear genome stability. Efficiently unwinds G-quadruplex (G4) DNA structures and forked RNA-DNA hybrids. Appears to move along DNA in single nucleotide or base pair steps, powered by hydrolysis of 1 molecule of ATP. Processes at an unwinding rate of about 75 bp/s. Resolves G4 structures, preventing replication pausing and double-strand breaks (DSBs) at G4 motifs. Involved in the maintenance of telomeric DNA. Inhibits telomere elongation, de novo telomere formation and telomere addition to DSBs via catalytic inhibition of telomerase. Reduces the processivity of telomerase by displacing active telomerase from DNA ends. Releases telomerase by unwinding the short telomerase RNA/telomeric DNA hybrid that is the intermediate in the telomerase reaction. Involved in the maintenance of ribosomal (rDNA). Required for efficient fork arrest at the replication fork barrier within rDNA. Involved in the maintenance of mitochondrial (mtDNA). Required to maintain mtDNA under conditions that introduce dsDNA breaks in mtDNA, either preventing or repairing dsDNA breaks. May inhibit replication progression to allow time for repair. May have a general role in chromosomal replication by affecting Okazaki fragment maturation. May have a role in conjunction with DNA2 helicase/nuclease in 5'-flap extension during Okazaki fragment processing. This Saccharomyces cerevisiae (strain YJM789) (Baker's yeast) protein is ATP-dependent DNA helicase PIF1.